Reading from the N-terminus, the 155-residue chain is uncharacterized protein (155 aa).

The region spanning 7–154 is the N-acetyltransferase domain; sequence LQINYKTLEE…VWLPESVELQ (148 aa).

This is an uncharacterized protein from Brevibacillus brevis (strain 47 / JCM 6285 / NBRC 100599).